The sequence spans 444 residues: Proline--tRNA ligase (444 aa).

It belongs to the class-II aminoacyl-tRNA synthetase family. ProS type 2 subfamily. Homodimer.

The protein localises to the cytoplasm. It carries out the reaction tRNA(Pro) + L-proline + ATP = L-prolyl-tRNA(Pro) + AMP + diphosphate. In terms of biological role, catalyzes the attachment of proline to tRNA(Pro) in a two-step reaction: proline is first activated by ATP to form Pro-AMP and then transferred to the acceptor end of tRNA(Pro). The protein is Proline--tRNA ligase of Bradyrhizobium sp. (strain BTAi1 / ATCC BAA-1182).